The following is a 542-amino-acid chain: Protein DETOXIFICATION 34 (542 aa).

The next 12 helical transmembrane spans lie at 97 to 117 (APIA…SIFV), 127 to 147 (AVAI…LGMA), 176 to 196 (ILLG…PLLI), 204 to 224 (IAEI…ALAI), 240 to 260 (IMAW…YLFI), 272 to 292 (AAFD…VVGW), 316 to 336 (FASA…IVLT), 344 to 364 (IAVG…MLFI), 390 to 410 (VIVT…VILI), 435 to 455 (LLGI…VAVG), 462 to 482 (VAYI…FLLG), and 491 to 511 (GIWI…LYMI).

The protein belongs to the multi antimicrobial extrusion (MATE) (TC 2.A.66.1) family.

Its subcellular location is the membrane. This chain is Protein DETOXIFICATION 34, found in Arabidopsis thaliana (Mouse-ear cress).